We begin with the raw amino-acid sequence, 198 residues long: Protein LKAAEAR1 (198 aa).

A disordered region spans residues 1–47 (MPTLGVKGARERDKNSASGAGAGAGAGAGAGEKHRKGPRTTDPPKTG). A compositionally biased stretch (gly residues) spans 20–30 (AGAGAGAGAGA).

This is Protein LKAAEAR1 (Lkaaear1) from Mus musculus (Mouse).